We begin with the raw amino-acid sequence, 102 residues long: Co-chaperonin GroES (102 aa).

This sequence belongs to the GroES chaperonin family. Heptamer of 7 subunits arranged in a ring. Interacts with the chaperonin GroEL.

It is found in the cytoplasm. In terms of biological role, together with the chaperonin GroEL, plays an essential role in assisting protein folding. The GroEL-GroES system forms a nano-cage that allows encapsulation of the non-native substrate proteins and provides a physical environment optimized to promote and accelerate protein folding. GroES binds to the apical surface of the GroEL ring, thereby capping the opening of the GroEL channel. This chain is Co-chaperonin GroES, found in Streptomyces griseus subsp. griseus (strain JCM 4626 / CBS 651.72 / NBRC 13350 / KCC S-0626 / ISP 5235).